We begin with the raw amino-acid sequence, 302 residues long: UDP-N-acetylenolpyruvoylglucosamine reductase (302 aa).

An FAD-binding PCMH-type domain is found at 31–210 (IGGQTKVYFR…ENEVLELKKK (180 aa)). Residue R175 is part of the active site. The active-site Proton donor is the S224. E297 is an active-site residue.

The protein belongs to the MurB family. It depends on FAD as a cofactor.

The protein localises to the cytoplasm. It carries out the reaction UDP-N-acetyl-alpha-D-muramate + NADP(+) = UDP-N-acetyl-3-O-(1-carboxyvinyl)-alpha-D-glucosamine + NADPH + H(+). It participates in cell wall biogenesis; peptidoglycan biosynthesis. Cell wall formation. In Pelagibacter ubique (strain HTCC1062), this protein is UDP-N-acetylenolpyruvoylglucosamine reductase.